Reading from the N-terminus, the 149-residue chain is Deoxyuridine 5'-triphosphate nucleotidohydrolase (149 aa).

Substrate contacts are provided by residues arginine 68 to glycine 70, asparagine 81, threonine 85 to aspartate 87, and lysine 95.

The protein belongs to the dUTPase family. Mg(2+) serves as cofactor.

The catalysed reaction is dUTP + H2O = dUMP + diphosphate + H(+). The protein operates within pyrimidine metabolism; dUMP biosynthesis; dUMP from dCTP (dUTP route): step 2/2. Functionally, this enzyme is involved in nucleotide metabolism: it produces dUMP, the immediate precursor of thymidine nucleotides and it decreases the intracellular concentration of dUTP so that uracil cannot be incorporated into DNA. In Neorickettsia sennetsu (strain ATCC VR-367 / Miyayama) (Ehrlichia sennetsu), this protein is Deoxyuridine 5'-triphosphate nucleotidohydrolase.